Consider the following 226-residue polypeptide: PKHD-type hydroxylase AZC_3753 (226 aa).

One can recognise a Fe2OG dioxygenase domain in the interval 78–178; it reads RILPPMFNRY…RVASFFWTQS (101 aa). Residues His-96, Asp-98, and His-159 each contribute to the Fe cation site. A 2-oxoglutarate-binding site is contributed by Arg-169.

The cofactor is Fe(2+). L-ascorbate is required as a cofactor.

The sequence is that of PKHD-type hydroxylase AZC_3753 from Azorhizobium caulinodans (strain ATCC 43989 / DSM 5975 / JCM 20966 / LMG 6465 / NBRC 14845 / NCIMB 13405 / ORS 571).